We begin with the raw amino-acid sequence, 501 residues long: Lysine--tRNA ligase (501 aa).

Positions 404 and 411 each coordinate Mg(2+).

It belongs to the class-II aminoacyl-tRNA synthetase family. Homodimer. Mg(2+) is required as a cofactor.

The protein resides in the cytoplasm. The catalysed reaction is tRNA(Lys) + L-lysine + ATP = L-lysyl-tRNA(Lys) + AMP + diphosphate. In Campylobacter jejuni (strain RM1221), this protein is Lysine--tRNA ligase.